Consider the following 117-residue polypeptide: Large ribosomal subunit protein uL18 (117 aa).

This sequence belongs to the universal ribosomal protein uL18 family. In terms of assembly, part of the 50S ribosomal subunit; part of the 5S rRNA/L5/L18/L25 subcomplex. Contacts the 5S and 23S rRNAs.

In terms of biological role, this is one of the proteins that bind and probably mediate the attachment of the 5S RNA into the large ribosomal subunit, where it forms part of the central protuberance. This is Large ribosomal subunit protein uL18 from Cronobacter sakazakii (strain ATCC BAA-894) (Enterobacter sakazakii).